Reading from the N-terminus, the 117-residue chain is Probable non-functional immunoglobulin kappa variable 1D-42 (117 aa).

Residues 1 to 22 (MDMRVPAQLLGLLLLWLPGVRF) form the signal peptide. Residues 23 to 45 (DIQMTQSPSFLSASVGDRVSIIC) form a framework-1 region. The Ig-like domain maps to 23-117 (DIQMTQSPSF…YYCKQDFSYP (95 aa)). Cysteine 45 and cysteine 110 form a disulfide bridge. The tract at residues 46–56 (WASEGISSNLA) is complementarity-determining-1. The tract at residues 57 to 71 (WYLQKPGKSPKLFLY) is framework-2. Residues 72-78 (DAKDLHP) form a complementarity-determining-2 region. The interval 79 to 110 (GVSSRFSGRGSGTDFTLTIISLKPEDFAAYYC) is framework-3. Positions 111 to 117 (KQDFSYP) are complementarity-determining-3.

In terms of assembly, immunoglobulins are composed of two identical heavy chains and two identical light chains; disulfide-linked.

Its subcellular location is the secreted. It is found in the cell membrane. Its function is as follows. Probable non-functional open reading frame (ORF) of V region of the variable domain of immunoglobulin light chains. Non-functional ORF generally cannot participate in the synthesis of a productive immunoglobulin chain due to altered V-(D)-J or switch recombination and/or splicing site (at mRNA level) and/or conserved amino acid change (protein level). Immunoglobulins, also known as antibodies, are membrane-bound or secreted glycoproteins produced by B lymphocytes. In the recognition phase of humoral immunity, the membrane-bound immunoglobulins serve as receptors which, upon binding of a specific antigen, trigger the clonal expansion and differentiation of B lymphocytes into immunoglobulins-secreting plasma cells. Secreted immunoglobulins mediate the effector phase of humoral immunity, which results in the elimination of bound antigens. The antigen binding site is formed by the variable domain of one heavy chain, together with that of its associated light chain. Thus, each immunoglobulin has two antigen binding sites with remarkable affinity for a particular antigen. The variable domains are assembled by a process called V-(D)-J rearrangement and can then be subjected to somatic hypermutations which, after exposure to antigen and selection, allow affinity maturation for a particular antigen. This chain is Probable non-functional immunoglobulin kappa variable 1D-42, found in Homo sapiens (Human).